The sequence spans 205 residues: Cerebellin-3 (205 aa).

Positions Met1–Ala32 are cleaved as a signal peptide. Positions Ala67–Leu205 constitute a C1q domain. Residues Val72–Leu205 form a necessary for interaction with CBLN3, and homotrimerization region. Asn90 is a glycosylation site (N-linked (GlcNAc...) asparagine).

Heterohexamer; disulfide-linked heterotrimers. Interacts with CBLN1. May also form oligomers with CBLN2 and CBLN4.

The protein resides in the endoplasmic reticulum. It localises to the golgi apparatus. The protein localises to the cis-Golgi network. It is found in the secreted. Its subcellular location is the synapse. Functionally, may be involved in synaptic functions in the CNS. The chain is Cerebellin-3 (CBLN3) from Homo sapiens (Human).